Here is a 22-residue protein sequence, read N- to C-terminus: Mu-conotoxin CnIIIC (22 aa).

Glutamine 1 is subject to Pyrrolidone carboxylic acid; partial. Intrachain disulfides connect cysteine 3–cysteine 15, cysteine 4–cysteine 21, and cysteine 10–cysteine 22. Cysteine 22 carries the post-translational modification Cysteine amide.

Belongs to the conotoxin M superfamily. Expressed by the venom duct.

The protein resides in the secreted. Functionally, mu-conotoxins block voltage-gated sodium channels (Nav). This synthetic toxin blocks both voltage-gated sodium channels and nicotinic acetylcholine receptor (nAChR). Inhibits the skeletal muscle rNav1.4/SCN4A (IC(50)=1.3 nM) and the brain rNav1.2/SCN2A in a long-lasting manner. A low inhibition is also observed on neuronal mNav1.6/SCN8A and mNav1.7/SCN9A. Modestly blocks nAChR alpha-3/beta-2 subtype (IC(50)=450 nM) (partially reversible) and, to a lesser extent, alpha-7 and alpha-4/beta-2 subtypes (reversible). In vitro, decreases twitch tension in mouse hemidiaphragms (IC(50)=150 nM), and displays a high blocking effect in mouse extensor digitorum longus muscles (IC(50)=46 nM). This chain is Mu-conotoxin CnIIIC, found in Conus consors (Singed cone).